The sequence spans 1169 residues: Zinc finger protein 862 (1169 aa).

Positions 11-77 (VTFDDITVYL…SVQGQRSLLE (67 aa)) constitute a KRAB 1 domain. The TTF-type 1 zinc-finger motif lies at 135–218 (KPRSIQKSWF…RDPIWAARFR (84 aa)). One can recognise a KRAB 2 domain in the interval 333-404 (VVFEDVAVYF…DPNGPKWGKG (72 aa)). Residues 461–544 (RPRSIQRSWF…KEDTPHTALV (84 aa)) form a TTF-type 2 zinc finger.

The protein localises to the nucleus. Its function is as follows. May be involved in transcriptional regulation. The polypeptide is Zinc finger protein 862 (ZNF862) (Homo sapiens (Human)).